Here is a 104-residue protein sequence, read N- to C-terminus: Thioredoxin (104 aa).

One can recognise a Thioredoxin domain in the interval Lys-2–Val-104. Cys-29 and Cys-32 form a disulfide bridge.

This sequence belongs to the thioredoxin family.

Participates in various redox reactions through the reversible oxidation of its active center dithiol to a disulfide and catalyzes dithiol-disulfide exchange reactions. In Rhodospirillum rubrum, this protein is Thioredoxin (trxA).